The following is a 415-amino-acid chain: 2-oxoadipate dioxygenase/decarboxylase (415 aa).

2-oxoadipate-binding residues include H66, R70, and H225. H66 contributes to the Fe(2+) binding site. Fe(2+)-binding residues include H225 and E296. A361 serves as a coordination point for 2-oxoadipate.

Belongs to the 2-oxoadipate dioxygenase/decarboxylase family. Requires Fe(2+) as cofactor.

It carries out the reaction 2-oxoadipate + O2 = (R)-2-hydroxyglutarate + CO2. Its function is as follows. Catalyzes the decarboxylation and hydroxylation of 2-oxoadipate (2OA) to form D-2-hydroxyglutarate (D-2-HGA). The protein is 2-oxoadipate dioxygenase/decarboxylase of Mycobacterium bovis (strain ATCC BAA-935 / AF2122/97).